Consider the following 513-residue polypeptide: ATP synthase subunit alpha (513 aa).

169–176 (GDRQTGKT) serves as a coordination point for ATP.

This sequence belongs to the ATPase alpha/beta chains family. In terms of assembly, F-type ATPases have 2 components, CF(1) - the catalytic core - and CF(0) - the membrane proton channel. CF(1) has five subunits: alpha(3), beta(3), gamma(1), delta(1), epsilon(1). CF(0) has three main subunits: a(1), b(2) and c(9-12). The alpha and beta chains form an alternating ring which encloses part of the gamma chain. CF(1) is attached to CF(0) by a central stalk formed by the gamma and epsilon chains, while a peripheral stalk is formed by the delta and b chains.

It is found in the cell inner membrane. It catalyses the reaction ATP + H2O + 4 H(+)(in) = ADP + phosphate + 5 H(+)(out). In terms of biological role, produces ATP from ADP in the presence of a proton gradient across the membrane. The alpha chain is a regulatory subunit. This Cupriavidus necator (strain ATCC 17699 / DSM 428 / KCTC 22496 / NCIMB 10442 / H16 / Stanier 337) (Ralstonia eutropha) protein is ATP synthase subunit alpha.